The sequence spans 372 residues: Carbamoyl phosphate synthase small chain (372 aa).

The interval 1-182 (MTLYCKRGYK…PKAPIVHLGN (182 aa)) is CPSase. Residues Ser53, Gly234, and Gly236 each contribute to the L-glutamine site. The 187-residue stretch at 186–372 (TIVVVDCGVK…KFKKMVSRNA (187 aa)) folds into the Glutamine amidotransferase type-1 domain. The active-site Nucleophile is Cys262. Residues Leu263, Gln266, Asn304, Gly306, and Tyr307 each contribute to the L-glutamine site. Active-site residues include His347 and Glu349.

The protein belongs to the CarA family. Composed of two chains; the small (or glutamine) chain promotes the hydrolysis of glutamine to ammonia, which is used by the large (or ammonia) chain to synthesize carbamoyl phosphate. Tetramer of heterodimers (alpha,beta)4.

It carries out the reaction hydrogencarbonate + L-glutamine + 2 ATP + H2O = carbamoyl phosphate + L-glutamate + 2 ADP + phosphate + 2 H(+). The enzyme catalyses L-glutamine + H2O = L-glutamate + NH4(+). Its pathway is amino-acid biosynthesis; L-arginine biosynthesis; carbamoyl phosphate from bicarbonate: step 1/1. It functions in the pathway pyrimidine metabolism; UMP biosynthesis via de novo pathway; (S)-dihydroorotate from bicarbonate: step 1/3. Functionally, small subunit of the glutamine-dependent carbamoyl phosphate synthetase (CPSase). CPSase catalyzes the formation of carbamoyl phosphate from the ammonia moiety of glutamine, carbonate, and phosphate donated by ATP, constituting the first step of 2 biosynthetic pathways, one leading to arginine and/or urea and the other to pyrimidine nucleotides. The small subunit (glutamine amidotransferase) binds and cleaves glutamine to supply the large subunit with the substrate ammonia. The polypeptide is Carbamoyl phosphate synthase small chain (Sulfurisphaera tokodaii (strain DSM 16993 / JCM 10545 / NBRC 100140 / 7) (Sulfolobus tokodaii)).